Consider the following 250-residue polypeptide: MEWTAPCIVLSAQPYGEADCLAAVFSEDQGLYRGLVRGGTSRQRGGIWQPGNLVMARWTARLADQLGSLTAELIHPAAALAMDDPLNLAVLRSLCTVAEGALPDREAHPAAFIPLPGLLTRLSLGGGQVVEDAIRWEAILLRELGYGLDLQRCAVTGQVSGLHYVSPRTGRAVSSDAAEPWLDRLLPLPAFLLHQAETDSDPVAWRDGLRLTGYFLSRDVFGTRHRPLPPARMSLYDRIAALTETEREHA.

Belongs to the RecO family.

Its function is as follows. Involved in DNA repair and RecF pathway recombination. The protein is DNA repair protein RecO of Granulibacter bethesdensis (strain ATCC BAA-1260 / CGDNIH1).